A 377-amino-acid polypeptide reads, in one-letter code: Cilia- and flagella-associated protein 263 (377 aa).

Coiled coils occupy residues 95 to 243 (LTAD…NQEL) and 280 to 354 (LRKE…SLKG).

The protein belongs to the CFAP263 family. Forms a complex with CFAP184; the interaction is required for functional activity in cilia. Interacts with HAP1 and PCM1.

It is found in the cytoplasm. It localises to the cytoskeleton. Its subcellular location is the microtubule organizing center. The protein resides in the centrosome. The protein localises to the centriolar satellite. It is found in the cell projection. It localises to the cilium. In terms of biological role, component of centriolar satellites contributing to primary cilium formation. In complex with CFAP263, acts as a regulator of ciliary beating that connects radial spoke 3 (RS3) to the inner dynein arm (IDA) and the nexin-dynein regulatory complex (N-DRC). The complex is positioned parallel to N-DRC and forms a connection between the arch at the base of RS3, the IDA tail and N-DRC. This is Cilia- and flagella-associated protein 263 from Homo sapiens (Human).